The chain runs to 1408 residues: MKALLDLFKQVTQKEEFDSIKIGLASPEKIRSWSYGEVKKPETINYRTFKPERDGLFCAKIFGPVKDYECLCGKYKRLKHRGVICEKCGVEVTLSKVRRERMGHIELASPVAHIWFLKSLPSRLGMVLDMTLRDIERVLYFEAYVVTDPGLTPLQRCQLLTDDDYRAKTEEYGDDFRASMGAEGIRDLLNTLNIRVEIDDLRREMGTTGSETKMKKISKRLKVLEAFSKSGIKPEWMILAVLPVLPPELRPLVPLDGGRFATSDLNDLYRRVINRNNRLKRLLELKAPEIIVRNEKRMLQEAVDSLLDNGRRGKAMTGANKRPLKSLADMIKGKGGRFRQNLLGKRVDYSGRSVIVVGPQLKLHQCGLPKKMALELFKPFIFNKLEIMGIASTIKAAKREVENESPIVWDILEDVIREHPVMLNRAPTLHRLGIQAFEPVLIEGKAIQLHPLVCAAFNADFDGDQMAVHVPLSLEAQMECRTLMMSTNNVLSPANGEPIIVPSQDIVLGLYYTTREKVNARGEGMYFANISEVSRAYENRVIELNARIFVRIREYELADGERREKITRYETTVGRALLSEILPAGLPFPLINKVLKKKEISKLINASFRRCGLRETVIFADKLMYAGFSYATRAGISICLDDMLTPAQKDAIISASEKEVQEIELQYTSGLVTQGERYNKVVDIWGRAGDQVAKAMMDQLGVEPIIDPETGTAKTGESGKPLIQESFNSIYMMADSGARGSAAQIRQLAGMRGLMAKPDGSIIETPITANFREGLNVLQYFISTHGARKGLADTALKTANSGYLTRRLVDVTQDLVVTQEDCGTSNGVVMKALVEGGEVIEALRERILGRVVANDIINPEHQAVIYPAGMLLDENAVDTIEMLGIDEVKVRTPLTCETRYGLCAKCYGRDLGRGTPVNVGEAVGVIAAQSIGEPGTQLTMRTFHIGGAASRTAVASQVESKSNGIVRYSPTMRYVTNARNELIAISRSGEVVIQDDNGRERERHKAPYGATLLIRDGEVVKAGQVLAAWDPHTRPIITEYSGKVRFENVEEGVTVAKQIDEVTGLSTLVVIDPKRRGVVQTKGLRPVVKLLDEEGKEVRLAGSNLPVHITFQVGSIITVRDGQQVSVGEVLARIPQESSKTRDITGGLPRVAELFEARSPKDAGVLAEVTGIVSFGKDTKGKQRLVITDLDGVSHEYLIPKDKHVTAHDGQVVNKGESIVDGPADPHDILRLLGVEALARYITDEVQDVYRLQGVKINDKHIEVIVRQMLRRVQIVDSGDTRFIPGEQVERAEMLAENEQVELEGKRPATYEYMLLGITKASLSTDSFISAASFQETTRVLTEAAIMGKKDDLRGLKENVIVGRLIPAGTGLTFHNTRKRQRLMLDTGEAPPLSEEETGEIRNSGYAV.

Positions 70, 72, 85, and 88 each coordinate Zn(2+). Mg(2+) contacts are provided by D460, D462, and D464. Zn(2+)-binding residues include C822, C896, C903, and C906. A disordered region spans residues D1386–V1408.

This sequence belongs to the RNA polymerase beta' chain family. In terms of assembly, the RNAP catalytic core consists of 2 alpha, 1 beta, 1 beta' and 1 omega subunit. When a sigma factor is associated with the core the holoenzyme is formed, which can initiate transcription. Mg(2+) is required as a cofactor. It depends on Zn(2+) as a cofactor.

It carries out the reaction RNA(n) + a ribonucleoside 5'-triphosphate = RNA(n+1) + diphosphate. In terms of biological role, DNA-dependent RNA polymerase catalyzes the transcription of DNA into RNA using the four ribonucleoside triphosphates as substrates. This Nitrosospira multiformis (strain ATCC 25196 / NCIMB 11849 / C 71) protein is DNA-directed RNA polymerase subunit beta'.